The following is a 530-amino-acid chain: MLGSERAVVEEWLSEFKALPDTQITSYAATLHRKKALVPALYKVIQDSNNELLEPVCHQLFELYRSSEVRLKRFTLQFLPELIWVYLRLTVSRDRQSNGCIEALLLGIYNLEIADKDGNNKVLSFTIPSLSKPSIYHEPSTIGSMALTEGALCQHDLIRVVYSDLHPQRETFTAQNRFEVLSFLMLCYNSAIVYMPASSYQSLCRMGSRVCVSGFPRQHEKQWKELCGRIVLDPEFMVQLLTGVYYAMYNGQWDLGQEVLDDIIYRAQLELFSQPLLVANAMKNSLPFDAPDSSQEGQKVLKVEVTPTVPRISRTAITTASIRRHRWRREGAEGLNGGEESLNMNDADEGFSSGASLSSQPHGTKPPSSSQRGSLRKVATGRSAKDKETALAIKSNESPRDSVVGKQFVQQQADLSIDSVELTPMKKHLSLPAGQVVPKTNSLSLIRTASASSSKSFDYVNGGQASTSIGVGTEGVTNLAATNANRYSTISLQEDRLGHAGEGKELLSPGAPLTKQSRSPSFNMQLISQV.

Phosphothreonine is present on residues threonine 30 and threonine 306. 2 positions are modified to phosphoserine: serine 321 and serine 341. The interval 328–404 (RREGAEGLNG…SNESPRDSVV (77 aa)) is disordered. A compositionally biased stretch (polar residues) spans 353–373 (SGASLSSQPHGTKPPSSSQRG). 4 positions are modified to phosphoserine: serine 430, serine 442, serine 444, and serine 491. Residues 502–530 (EGKELLSPGAPLTKQSRSPSFNMQLISQV) form a disordered region. Over residues 514-530 (TKQSRSPSFNMQLISQV) the composition is skewed to polar residues.

The protein belongs to the Hyccin family. Component of a phosphatidylinositol 4-kinase (PI4K) complex, composed of PI4KA, EFR3 (EFR3A or EFR3B), TTC7 (TTC7A or TTC7B) and HYCC (HYCC1 or HYCC2). Expressed in the central nervous system. Expressed at much lower level in oligodendrocytes than in neurons.

The protein localises to the cytoplasm. It is found in the cytosol. Its subcellular location is the cell membrane. Its function is as follows. Component of a complex required to localize phosphatidylinositol 4-kinase (PI4K) to the plasma membrane. This chain is Hyccin 2 (Hycc2), found in Mus musculus (Mouse).